The chain runs to 229 residues: DNA mismatch repair protein MutH (229 aa).

The protein belongs to the MutH family.

The protein resides in the cytoplasm. Sequence-specific endonuclease that cleaves unmethylated GATC sequences. It is involved in DNA mismatch repair. The sequence is that of DNA mismatch repair protein MutH from Escherichia coli O45:K1 (strain S88 / ExPEC).